The chain runs to 179 residues: Large ribosomal subunit protein uL5 (179 aa).

The protein belongs to the universal ribosomal protein uL5 family. In terms of assembly, part of the 50S ribosomal subunit; part of the 5S rRNA/L5/L18/L25 subcomplex. Contacts the 5S rRNA and the P site tRNA. Forms a bridge to the 30S subunit in the 70S ribosome.

In terms of biological role, this is one of the proteins that bind and probably mediate the attachment of the 5S RNA into the large ribosomal subunit, where it forms part of the central protuberance. In the 70S ribosome it contacts protein S13 of the 30S subunit (bridge B1b), connecting the 2 subunits; this bridge is implicated in subunit movement. Contacts the P site tRNA; the 5S rRNA and some of its associated proteins might help stabilize positioning of ribosome-bound tRNAs. The protein is Large ribosomal subunit protein uL5 of Bordetella bronchiseptica (strain ATCC BAA-588 / NCTC 13252 / RB50) (Alcaligenes bronchisepticus).